A 169-amino-acid polypeptide reads, in one-letter code: Peptide deformylase (169 aa).

C92 and H134 together coordinate Fe cation. Residue E135 is part of the active site. A Fe cation-binding site is contributed by H138.

This sequence belongs to the polypeptide deformylase family. Fe(2+) is required as a cofactor.

It carries out the reaction N-terminal N-formyl-L-methionyl-[peptide] + H2O = N-terminal L-methionyl-[peptide] + formate. Functionally, removes the formyl group from the N-terminal Met of newly synthesized proteins. Requires at least a dipeptide for an efficient rate of reaction. N-terminal L-methionine is a prerequisite for activity but the enzyme has broad specificity at other positions. The chain is Peptide deformylase from Cellvibrio japonicus (strain Ueda107) (Pseudomonas fluorescens subsp. cellulosa).